Here is a 154-residue protein sequence, read N- to C-terminus: Spermatogenesis-associated protein 19, mitochondrial (154 aa).

The transit peptide at 1-24 (MIITTWIMYILARKSIGLPFPPRV) directs the protein to the mitochondrion. Residues S26 and S116 each carry the phosphoserine modification.

In terms of tissue distribution, expressed in the testis.

It localises to the mitochondrion outer membrane. The protein resides in the mitochondrion. Its subcellular location is the cell projection. It is found in the cilium. The protein localises to the flagellum. In terms of biological role, essential for sperm motility and male fertility. Plays an important role in sperm motility by regulating the organization and function of the mitochondria and is also required for correct sperm midpiece assembly. This Rattus norvegicus (Rat) protein is Spermatogenesis-associated protein 19, mitochondrial (Spata19).